The chain runs to 211 residues: Thymidylate kinase (211 aa).

Residue glycine 11 to threonine 18 coordinates ATP.

This sequence belongs to the thymidylate kinase family.

It carries out the reaction dTMP + ATP = dTDP + ADP. Functionally, phosphorylation of dTMP to form dTDP in both de novo and salvage pathways of dTTP synthesis. The polypeptide is Thymidylate kinase (Streptococcus equi subsp. zooepidemicus (strain H70)).